A 294-amino-acid polypeptide reads, in one-letter code: NAD kinase (294 aa).

Asp74 (proton acceptor) is an active-site residue. NAD(+) contacts are provided by residues 74–75 (DG), Arg79, 149–150 (NE), Asp179, 190–195 (TGYSLS), and Ala214.

The protein belongs to the NAD kinase family. The cofactor is a divalent metal cation.

It localises to the cytoplasm. It carries out the reaction NAD(+) + ATP = ADP + NADP(+) + H(+). Its function is as follows. Involved in the regulation of the intracellular balance of NAD and NADP, and is a key enzyme in the biosynthesis of NADP. Catalyzes specifically the phosphorylation on 2'-hydroxyl of the adenosine moiety of NAD to yield NADP. This is NAD kinase from Flavobacterium johnsoniae (strain ATCC 17061 / DSM 2064 / JCM 8514 / BCRC 14874 / CCUG 350202 / NBRC 14942 / NCIMB 11054 / UW101) (Cytophaga johnsonae).